The primary structure comprises 148 residues: Transcriptional regulator MraZ (148 aa).

SpoVT-AbrB domains follow at residues 5–53 (ETAI…VEKE) and 82–125 (SALL…SEQA).

The protein belongs to the MraZ family. Forms oligomers.

It is found in the cytoplasm. The protein resides in the nucleoid. In Xylella fastidiosa (strain 9a5c), this protein is Transcriptional regulator MraZ.